The following is a 158-amino-acid chain: Small ribosomal subunit protein uS17 (158 aa).

Position 2 is an N-acetylalanine (Ala-2). Position 22 is a citrulline (Arg-22). N6-acetyllysine occurs at positions 38, 45, and 58. The S-palmitoyl cysteine moiety is linked to residue Cys-60. Residue Ser-67 is modified to Phosphoserine. At Arg-69 the chain carries Omega-N-methylarginine. Ser-110 bears the Phosphoserine mark.

It belongs to the universal ribosomal protein uS17 family. In terms of assembly, component of the small ribosomal subunit. Part of the small subunit (SSU) processome, composed of more than 70 proteins and the RNA chaperone small nucleolar RNA (snoRNA) U3. Post-translationally, citrullinated by PADI4.

The protein localises to the cytoplasm. The protein resides in the nucleus. It localises to the nucleolus. Component of the small ribosomal subunit. The ribosome is a large ribonucleoprotein complex responsible for the synthesis of proteins in the cell. Part of the small subunit (SSU) processome, first precursor of the small eukaryotic ribosomal subunit. During the assembly of the SSU processome in the nucleolus, many ribosome biogenesis factors, an RNA chaperone and ribosomal proteins associate with the nascent pre-rRNA and work in concert to generate RNA folding, modifications, rearrangements and cleavage as well as targeted degradation of pre-ribosomal RNA by the RNA exosome. This Mus musculus (Mouse) protein is Small ribosomal subunit protein uS17 (Rps11).